The sequence spans 198 residues: Recombination protein RecR (198 aa).

The C4-type zinc finger occupies 58–73 (CKVCQTLTDKEICPIC). A Toprim domain is found at 81 to 175 (KVIMVVENTR…KVSRIASGVP (95 aa)).

This sequence belongs to the RecR family.

In terms of biological role, may play a role in DNA repair. It seems to be involved in an RecBC-independent recombinational process of DNA repair. It may act with RecF and RecO. The polypeptide is Recombination protein RecR (Lachnoclostridium phytofermentans (strain ATCC 700394 / DSM 18823 / ISDg) (Clostridium phytofermentans)).